The chain runs to 411 residues: Allantoate amidohydrolase (411 aa).

4 residues coordinate Zn(2+): His81, Asp92, Glu127, and His190. Residues Arg215, Asn275, and Arg288 each contribute to the allantoate site. His382 contributes to the Zn(2+) binding site.

It belongs to the peptidase M20 family. In terms of assembly, homodimer. The cofactor is Zn(2+).

The protein resides in the cytoplasm. The catalysed reaction is allantoate + H2O + 2 H(+) = (S)-2-ureidoglycine + NH4(+) + CO2. It participates in nitrogen metabolism; (S)-allantoin degradation. With respect to regulation, sulfate could be an allosteric effector of the enzyme that is responsible for stabilizing substrate binding. In addition, this anion effector may act as a counterion during enzyme-mediated catalysis. Involved in the anaerobic nitrogen utilization via the assimilation of allantoin. Catalyzes specifically the hydrolysis of allantoate to yield CO2, NH3 and S-ureidoglycine, which is unstable and readily undergoes a second deamination by S-ureidoglycine aminohydrolase AllE to yield S-ureidoglycolate and NH3. In vivo, the spontaneous release of S-ureidoglycolate and ammonia from S-ureidoglycine appears to be too slow to sustain an efficient flux of nitrogen. The chain is Allantoate amidohydrolase from Escherichia coli (strain K12).